We begin with the raw amino-acid sequence, 137 residues long: Hydrogenase maturation factor HypA (137 aa).

His2 contacts Ni(2+). Residues Cys73, Cys75, Cys105, and Cys108 each contribute to the Zn(2+) site.

It belongs to the HypA/HybF family.

In terms of biological role, involved in the maturation of [NiFe] hydrogenases. Required for nickel insertion into the metal center of the hydrogenase. The polypeptide is Hydrogenase maturation factor HypA (Methanosarcina mazei (strain ATCC BAA-159 / DSM 3647 / Goe1 / Go1 / JCM 11833 / OCM 88) (Methanosarcina frisia)).